The primary structure comprises 119 residues: Beta-2-microglobulin (119 aa).

Residues 1–20 (MARFVAVALLVLLSLSGLEA) form the signal peptide. The 90-residue stretch at 25–114 (PKIQVYSRHP…VTFSTPKTVK (90 aa)) folds into the Ig-like C1-type domain. The cysteines at positions 45 and 100 are disulfide-linked.

The protein belongs to the beta-2-microglobulin family. Heterodimer of an alpha chain and a beta chain. Beta-2-microglobulin is the beta-chain of major histocompatibility complex class I molecules.

It is found in the secreted. Its function is as follows. Component of the class I major histocompatibility complex (MHC). Involved in the presentation of peptide antigens to the immune system. The chain is Beta-2-microglobulin (B2M) from Plecturocebus moloch (Dusky titi monkey).